A 405-amino-acid polypeptide reads, in one-letter code: Tyrosine--tRNA ligase (405 aa).

L-tyrosine is bound at residue Tyr-35. The 'HIGH' region motif lies at Ala-40–His-49. Positions 166 and 170 each coordinate L-tyrosine. The short motif at Lys-226–Ser-230 is the 'KMSKS' region element. Position 229 (Lys-229) interacts with ATP. An S4 RNA-binding domain is found at Ile-340–Ile-405.

Belongs to the class-I aminoacyl-tRNA synthetase family. TyrS type 1 subfamily. Homodimer.

It localises to the cytoplasm. The catalysed reaction is tRNA(Tyr) + L-tyrosine + ATP = L-tyrosyl-tRNA(Tyr) + AMP + diphosphate + H(+). Its function is as follows. Catalyzes the attachment of tyrosine to tRNA(Tyr) in a two-step reaction: tyrosine is first activated by ATP to form Tyr-AMP and then transferred to the acceptor end of tRNA(Tyr). The polypeptide is Tyrosine--tRNA ligase (Borreliella burgdorferi (strain ATCC 35210 / DSM 4680 / CIP 102532 / B31) (Borrelia burgdorferi)).